The sequence spans 119 residues: Ribonuclease P protein component (119 aa).

It belongs to the RnpA family. Consists of a catalytic RNA component (M1 or rnpB) and a protein subunit.

It catalyses the reaction Endonucleolytic cleavage of RNA, removing 5'-extranucleotides from tRNA precursor.. Its function is as follows. RNaseP catalyzes the removal of the 5'-leader sequence from pre-tRNA to produce the mature 5'-terminus. It can also cleave other RNA substrates such as 4.5S RNA. The protein component plays an auxiliary but essential role in vivo by binding to the 5'-leader sequence and broadening the substrate specificity of the ribozyme. In Escherichia coli O6:H1 (strain CFT073 / ATCC 700928 / UPEC), this protein is Ribonuclease P protein component.